The chain runs to 122 residues: uncharacterized protein (122 aa).

This is an uncharacterized protein from Human adenovirus F serotype 41 (HAdV-41).